Consider the following 671-residue polypeptide: Phenol 2-monooxygenase (671 aa).

FAD contacts are provided by residues 10-43 (DVLI…RIFD) and 295-305 (LQEGRVFLAGD).

This sequence belongs to the PheA/TfdB FAD monooxygenase family. FAD is required as a cofactor.

It is found in the cytoplasm. It catalyses the reaction phenol + NADPH + O2 + H(+) = catechol + NADP(+) + H2O. The protein operates within aromatic compound metabolism; phenol degradation. In terms of biological role, hydroxylates phenol to catechol. Also acts on cresols. The protein is Phenol 2-monooxygenase (tbuD) of Ralstonia pickettii (Burkholderia pickettii).